The primary structure comprises 542 residues: Chaperonin GroEL 2 (542 aa).

ATP-binding positions include 30-33 (TLGP), Lys51, 87-91 (DGTTT), Gly415, and Asp496.

Belongs to the chaperonin (HSP60) family. In terms of assembly, forms a cylinder of 14 subunits composed of two heptameric rings stacked back-to-back. Interacts with the co-chaperonin GroES.

The protein resides in the cytoplasm. The enzyme catalyses ATP + H2O + a folded polypeptide = ADP + phosphate + an unfolded polypeptide.. Its function is as follows. Together with its co-chaperonin GroES, plays an essential role in assisting protein folding. The GroEL-GroES system forms a nano-cage that allows encapsulation of the non-native substrate proteins and provides a physical environment optimized to promote and accelerate protein folding. The sequence is that of Chaperonin GroEL 2 from Mesorhizobium japonicum (strain LMG 29417 / CECT 9101 / MAFF 303099) (Mesorhizobium loti (strain MAFF 303099)).